The sequence spans 421 residues: N-succinylarginine dihydrolase (421 aa).

Residues 19–28 (AGLSLGNLAS), Asn105, and 132–133 (HR) each bind substrate. Glu167 is a catalytic residue. Arg199 contacts substrate. Residue His235 is part of the active site. The substrate site is built by Asp237 and Asn346. The Nucleophile role is filled by Cys352.

The protein belongs to the succinylarginine dihydrolase family. As to quaternary structure, homodimer.

The catalysed reaction is N(2)-succinyl-L-arginine + 2 H2O + 2 H(+) = N(2)-succinyl-L-ornithine + 2 NH4(+) + CO2. Its pathway is amino-acid degradation; L-arginine degradation via AST pathway; L-glutamate and succinate from L-arginine: step 2/5. Functionally, catalyzes the hydrolysis of N(2)-succinylarginine into N(2)-succinylornithine, ammonia and CO(2). This Novosphingobium aromaticivorans (strain ATCC 700278 / DSM 12444 / CCUG 56034 / CIP 105152 / NBRC 16084 / F199) protein is N-succinylarginine dihydrolase.